Reading from the N-terminus, the 560-residue chain is Serine palmitoyltransferase 2 (560 aa).

The helical transmembrane segment at Pro-65–Leu-85 threads the bilayer. Lys-377 bears the N6-(pyridoxal phosphate)lysine mark.

It belongs to the class-II pyridoxal-phosphate-dependent aminotransferase family. In terms of assembly, component of the serine palmitoyltransferase (SPT) complex, which is composed of SPTLC1, SPTLC2 or SPTLC3 and SPTSSA or SPTSSB. The heterodimer consisting of SPTLC1 and SPTLC2/SPTLC3 forms the catalytic core of the enzyme, while SPTSSA or SPTSSB subunits determine substrate specificity. SPT also interacts with ORMDL proteins, especially ORMDL3, which negatively regulate SPT activity in the presence of ceramides. Forms dimers of heterodimers with SPTLC1. The cofactor is pyridoxal 5'-phosphate.

It is found in the endoplasmic reticulum membrane. The enzyme catalyses L-serine + hexadecanoyl-CoA + H(+) = 3-oxosphinganine + CO2 + CoA. It carries out the reaction octadecanoyl-CoA + L-serine + H(+) = 3-oxoeicosasphinganine + CO2 + CoA. The protein operates within lipid metabolism; sphingolipid metabolism. With respect to regulation, SPT complex catalytic activity is negatively regulated by ORMDL proteins, including ORMDL3, in the presence of ceramides. This mechanism allows to maintain ceramide levels at sufficient concentrations for the production of complex sphingolipids, but which prevents the accumulation of ceramides to levels that trigger apoptosis. Functionally, component of the serine palmitoyltransferase multisubunit enzyme (SPT) that catalyzes the initial and rate-limiting step in sphingolipid biosynthesis by condensing L-serine and activated acyl-CoA (most commonly palmitoyl-CoA) to form long-chain bases. The SPT complex is composed of SPTLC1, SPTLC2 or SPTLC3 and SPTSSA or SPTSSB. Within this complex, the heterodimer consisting of SPTLC1 and SPTLC2/SPTLC3 forms the catalytic core. The composition of the serine palmitoyltransferase (SPT) complex determines the substrate preference. The SPTLC1-SPTLC2-SPTSSA complex shows a strong preference for C16-CoA substrate, while the SPTLC1-SPTLC3-SPTSSA isozyme uses both C14-CoA and C16-CoA as substrates, with a slight preference for C14-CoA. The SPTLC1-SPTLC2-SPTSSB complex shows a strong preference for C18-CoA substrate, while the SPTLC1-SPTLC3-SPTSSB isozyme displays an ability to use a broader range of acyl-CoAs, without apparent preference. Crucial for adipogenesis. This is Serine palmitoyltransferase 2 (SPTLC2) from Cricetulus griseus (Chinese hamster).